The primary structure comprises 430 residues: 3-phosphoshikimate 1-carboxyvinyltransferase (430 aa).

3-phosphoshikimate-binding residues include lysine 23, serine 24, and arginine 28. Phosphoenolpyruvate is bound at residue lysine 23. Phosphoenolpyruvate contacts are provided by glycine 95 and arginine 123. 4 residues coordinate 3-phosphoshikimate: serine 169, glutamine 171, aspartate 315, and lysine 342. Glutamine 171 lines the phosphoenolpyruvate pocket. Aspartate 315 (proton acceptor) is an active-site residue. Residues arginine 346 and arginine 388 each contribute to the phosphoenolpyruvate site.

The protein belongs to the EPSP synthase family. In terms of assembly, monomer.

It localises to the cytoplasm. The catalysed reaction is 3-phosphoshikimate + phosphoenolpyruvate = 5-O-(1-carboxyvinyl)-3-phosphoshikimate + phosphate. It participates in metabolic intermediate biosynthesis; chorismate biosynthesis; chorismate from D-erythrose 4-phosphate and phosphoenolpyruvate: step 6/7. Catalyzes the transfer of the enolpyruvyl moiety of phosphoenolpyruvate (PEP) to the 5-hydroxyl of shikimate-3-phosphate (S3P) to produce enolpyruvyl shikimate-3-phosphate and inorganic phosphate. The polypeptide is 3-phosphoshikimate 1-carboxyvinyltransferase (Streptococcus pyogenes serotype M2 (strain MGAS10270)).